A 503-amino-acid polypeptide reads, in one-letter code: E3 ubiquitin-protein ligase ariadne-1 (503 aa).

The span at 1–11 shows a compositional bias: acidic residues; that stretch reads MDSDNDNDFCD. The interval 1-40 is disordered; sequence MDSDNDNDFCDNVDSGNVSSGDDGDDDFGMEVDLPSSADR. The segment covering 12 to 21 has biased composition (low complexity); sequence NVDSGNVSSG. The TRIAD supradomain stretch occupies residues 129-340; sequence QCEECEICFS…SSWYNCNRYD (212 aa). 18 residues coordinate Zn(2+): cysteine 133, cysteine 136, cysteine 150, histidine 152, cysteine 155, cysteine 158, cysteine 178, cysteine 183, cysteine 223, cysteine 228, cysteine 244, cysteine 246, cysteine 251, cysteine 254, histidine 259, cysteine 264, cysteine 291, and cysteine 294. Residues 133 to 183 form an RING-type 1 zinc finger; that stretch reads CEICFSQLPPDSMAGLECGHRFCMPCWHEYLSTKIVAEGLGQTISCAAHGC. An important for interaction with Ubc10 region spans residues 133 to 201; the sequence is CEICFSQLPP…VANLVTDARV (69 aa). The IBR-type zinc finger occupies 203–264; that stretch reads VKYQQLITNS…GENWHDPVKC (62 aa). The segment at 291 to 322 adopts an RING-type 2; atypical zinc-finger fold; the sequence is CPRCSVTIEKDGGCNHMVCKNQNCKNEFCWVC. Residue cysteine 304 is part of the active site. Positions 309, 314, 319, 322, 329, and 336 each coordinate Zn(2+). Positions 341-361 form a coiled coil; the sequence is EDEAKTARDAQEKLRSSLARY.

It belongs to the RBR family. Ariadne subfamily. In terms of assembly, can form homodimers. Interacts (via RING-type 1 zinc finger) with Ubc10. Interacts with the LINC complex member koi. Interacts with park. Interacts with ari-2. Specifically interacts with isoform ECR-A of EcR. In terms of processing, autophosphorylated. As to expression, widely expressed, with prominent levels in the nervous system and female gonads.

Its subcellular location is the cytoplasm. The protein localises to the nucleus. The enzyme catalyses [E2 ubiquitin-conjugating enzyme]-S-ubiquitinyl-L-cysteine + [acceptor protein]-L-lysine = [E2 ubiquitin-conjugating enzyme]-L-cysteine + [acceptor protein]-N(6)-ubiquitinyl-L-lysine.. In terms of biological role, atypical E3 ubiquitin-protein ligase, which catalyzes ubiquitination of target proteins together with ubiquitin-conjugating enzyme E2 Ubc10. Controls the subcellular localization and morphology of muscle nuclei (myonuclei) by regulating the protein levels and distribution of the LINC (LInker of Nucleoskeleton and Cytoskeleton) complex. Functions by mediating the monoubiquitination of the LINC complex subunit koi leading to its subsequent proteasomal degradation. Appears to function, at least partially redundantly, with the RBR E3 ligase family member park in nuclear localization and morphology. Likely to function in metamorphosis by regulating the proteins levels of EcR isoform A (ECR-A) and its heterodimeric partner usp, via the ubiquitination and subsequent degradation of ECR-A. The polypeptide is E3 ubiquitin-protein ligase ariadne-1 (Drosophila melanogaster (Fruit fly)).